We begin with the raw amino-acid sequence, 230 residues long: Lipopolysaccharide core heptose(II) kinase WaaY (230 aa).

This sequence belongs to the protein kinase superfamily. RfaY/WaaY family.

The enzyme catalyses alpha-D-Glc-(1-&gt;3)-[L-alpha-D-Hep-(1-&gt;7)]-L-alpha-D-Hep-(1-&gt;3)-4-O-PO3(2-)-L-alpha-D-Hep-(1-&gt;5)-[alpha-Kdo-(2-&gt;4)]-alpha-Kdo-(2-&gt;6)-lipid A + ATP = alpha-D-Glc-(1-&gt;3)-[L-alpha-D-Hep-(1-&gt;7)]-4-O-PO3(2-)-L-alpha-D-Hep-(1-&gt;3)-4-O-PO3(2-)-L-alpha-D-Hep-(1-&gt;5)-[alpha-Kdo-(2-&gt;4)]-alpha-Kdo-(2-&gt;6)-lipid A + ADP + H(+). The protein operates within bacterial outer membrane biogenesis; LPS core biosynthesis. Functionally, kinase involved in the biosynthesis of the core oligosaccharide region of lipopolysaccharide (LPS). Catalyzes the phosphorylation of the second heptose unit (HepII) of the inner core. This chain is Lipopolysaccharide core heptose(II) kinase WaaY, found in Escherichia coli.